Consider the following 303-residue polypeptide: Archaeosortase A (303 aa).

The next 7 helical transmembrane spans lie at 3-23 (GLLS…GAVA), 36-56 (TAAW…FTLV), 60-80 (YIEG…GWLL), 93-113 (AVAA…FTLL), 169-189 (VVLA…IAAV), 200-220 (LAIA…FIAI), and 259-279 (LAVV…PELL). The active-site Acyl-thioester intermediate is Cys173. The Proton donor role is filled by Arg214.

Belongs to the exosortase/archaeosortase family. Archaeosortase A subfamily.

The protein resides in the cell membrane. Transpeptidase that recognizes and modifies its substrate by proteolytic cleavage of a sorting signal. Following cleavage, a covalent intermediate is formed via a thioester bond between the archaeosortase and its substrate, which is then transferred and covalently attached to the cell membrane. This sortase recognizes a tripartite structure consisting of a conserved Pro-Gly-Phe (PGF) motif, followed by a transmembrane alpha helix domain and a cluster of basic residues, usually at the C-terminus of target proteins. Confirmed substrates include the cell surface S-layer glycoprotein Csg and HVO_0405. ArtA is required for the C-terminal processing of Csg and for its lipidation and attachment to the archaeal plasma membrane. It is also required for the processing of HVO_0405, which contains an atypical central tripartite structure. This is Archaeosortase A from Haloferax volcanii (strain ATCC 29605 / DSM 3757 / JCM 8879 / NBRC 14742 / NCIMB 2012 / VKM B-1768 / DS2) (Halobacterium volcanii).